The following is a 249-amino-acid chain: MAMQMNSVVHVSTSPSPSPATSPPPEGKQEHGEVAAVHVVGVGDDEAVMVVKDEEAFGGGGVDYSGRAQWLRAAVLGANDGLVSVASLMIGVGAVSESGRAMLVSGVAGLVAGACSMAIGEFVSVYAQYDIEVAAARRRRRQRRRRCDGDGEEEGSGRLPSPFKAAAASALAFTVGALLPLLAGGFVRPWAPRVAAVCAATSAALAGFGALGAALGGASPARSAARVLLGGWAAMAACYGVLRLFANLY.

Residues 1 to 32 (MAMQMNSVVHVSTSPSPSPATSPPPEGKQEHG) form a disordered region. Residues 1-74 (MAMQMNSVVH…SGRAQWLRAA (74 aa)) are Cytoplasmic-facing. Over residues 16–26 (SPSPATSPPPE) the composition is skewed to pro residues. Residues 75–95 (VLGANDGLVSVASLMIGVGAV) form a helical membrane-spanning segment. Residues 96 to 102 (SESGRAM) are Vacuolar-facing. The chain crosses the membrane as a helical span at residues 103–123 (LVSGVAGLVAGACSMAIGEFV). Residues 124–166 (SVYAQYDIEVAAARRRRRQRRRRCDGDGEEEGSGRLPSPFKAA) lie on the Cytoplasmic side of the membrane. A helical membrane pass occupies residues 167 to 187 (AASALAFTVGALLPLLAGGFV). Residues 188–193 (RPWAPR) lie on the Vacuolar side of the membrane. The chain crosses the membrane as a helical span at residues 194–214 (VAAVCAATSAALAGFGALGAA). Topologically, residues 215 to 226 (LGGASPARSAAR) are cytoplasmic. Residues 227 to 247 (VLLGGWAAMAACYGVLRLFAN) traverse the membrane as a helical segment. The Vacuolar portion of the chain corresponds to 248–249 (LY).

It belongs to the CCC1 family.

The protein resides in the vacuole membrane. It catalyses the reaction Fe(2+)(in) = Fe(2+)(out). Functionally, probable vacuolar iron transporter that may be involved in the regulation of iron distribution throughout the plant. The sequence is that of Vacuolar iron transporter homolog 3 from Oryza sativa subsp. japonica (Rice).